The chain runs to 386 residues: DNA-directed RNA polymerase subunit Rpo1C (386 aa).

This sequence belongs to the RNA polymerase beta' chain family. In terms of assembly, part of the RNA polymerase complex.

It is found in the cytoplasm. The enzyme catalyses RNA(n) + a ribonucleoside 5'-triphosphate = RNA(n+1) + diphosphate. In terms of biological role, DNA-dependent RNA polymerase (RNAP) catalyzes the transcription of DNA into RNA using the four ribonucleoside triphosphates as substrates. Forms part of the jaw domain. The protein is DNA-directed RNA polymerase subunit Rpo1C of Methanococcus maripaludis (strain DSM 14266 / JCM 13030 / NBRC 101832 / S2 / LL).